Here is an 865-residue protein sequence, read N- to C-terminus: Prominin-1 (865 aa).

The first 19 residues, 1-19 (MALVLGSLLLLGLCGNSFS), serve as a signal peptide directing secretion. The Extracellular segment spans residues 20-108 (GGQPSSTDAP…GLKIVYYEAG (89 aa)). Residues 109–129 (IILCCVLGLLFIILMPLVGYF) form a helical membrane-spanning segment. Topologically, residues 130-157 (FCMCRCCNKCGGEMHQRQKENGPFLRKC) are cytoplasmic. A helical membrane pass occupies residues 158 to 178 (FAISLLVICIIISIGIFYGFV). Residues 179 to 433 (ANHQVRTRIK…LPTLEEYDSY (255 aa)) are Extracellular-facing. A glycan (N-linked (GlcNAc...) asparagine) is linked at Asn220. 3 positions are modified to N6-acetyllysine: Lys225, Lys257, and Lys264. 3 N-linked (GlcNAc...) asparagine glycosylation sites follow: Asn274, Asn395, and Asn414. The chain crosses the membrane as a helical span at residues 434–454 (WWLGGLVICSLLTLIVIFYYL). Residues 455–486 (GLLCGVCGYDRHATPTTRGCVSNTGGVFLMVG) are Cytoplasmic-facing. Residues 487-507 (VGLSFLFCWILMIIVVLTFVF) form a helical membrane-spanning segment. Residues 508-792 (GANVEKLICE…LCSYIIDPLN (285 aa)) lie on the Extracellular side of the membrane. N-linked (GlcNAc...) asparagine glycosylation is found at Asn548, Asn580, Asn729, and Asn730. Residues 793–813 (LFWFGIGKATVFLLPALIFAV) form a helical membrane-spanning segment. Residues 814 to 865 (KLAKYYRRMDSEDVYDDVETIPMKNMENGNNGYHKDHVYGIHNPVMTSPSQH) lie on the Cytoplasmic side of the membrane. Ser863 bears the Phosphoserine mark.

It belongs to the prominin family. In terms of assembly, interacts with CDHR1 and with actin filaments. Interacts with NAT8 and NAT8B. In terms of processing, isoform 1 and isoform 2 are glycosylated. Acetylation at Lys-225, Lys-257 and Lys-264 by NAT8 and NAT8B may control PROM1 protein expression and its function in cell apoptosis. Isoform 1 is selectively expressed on CD34 hematopoietic stem and progenitor cells in adult and fetal bone marrow, fetal liver, cord blood and adult peripheral blood. Isoform 1 is not detected on other blood cells. Isoform 1 is also expressed in a number of non-lymphoid tissues including retina, pancreas, placenta, kidney, liver, lung, brain and heart. Found in saliva within small membrane particles. Isoform 2 is predominantly expressed in fetal liver, skeletal muscle, kidney, and heart as well as adult pancreas, kidney, liver, lung, and placenta. Isoform 2 is highly expressed in fetal liver, low in bone marrow, and barely detectable in peripheral blood. Isoform 2 is expressed on hematopoietic stem cells and in epidermal basal cells (at protein level). Expressed in adult retina by rod and cone photoreceptor cells (at protein level).

The protein resides in the apical cell membrane. The protein localises to the cell projection. It is found in the microvillus membrane. It localises to the cilium. Its subcellular location is the photoreceptor outer segment. The protein resides in the endoplasmic reticulum. The protein localises to the endoplasmic reticulum-Golgi intermediate compartment. In terms of biological role, may play a role in cell differentiation, proliferation and apoptosis. Binds cholesterol in cholesterol-containing plasma membrane microdomains and may play a role in the organization of the apical plasma membrane in epithelial cells. During early retinal development acts as a key regulator of disk morphogenesis. Involved in regulation of MAPK and Akt signaling pathways. In neuroblastoma cells suppresses cell differentiation such as neurite outgrowth in a RET-dependent manner. The polypeptide is Prominin-1 (PROM1) (Homo sapiens (Human)).